The chain runs to 230 residues: 2,3-bisphosphoglycerate-dependent phosphoglycerate mutase (230 aa).

Substrate-binding positions include arginine 8–asparagine 15, threonine 21–glycine 22, arginine 60, glutamate 87–tyrosine 90, lysine 98, arginine 114–arginine 115, and glycine 183–asparagine 184. The Tele-phosphohistidine intermediate role is filled by histidine 9. The active-site Proton donor/acceptor is the glutamate 87.

It belongs to the phosphoglycerate mutase family. BPG-dependent PGAM subfamily.

The catalysed reaction is (2R)-2-phosphoglycerate = (2R)-3-phosphoglycerate. The protein operates within carbohydrate degradation; glycolysis; pyruvate from D-glyceraldehyde 3-phosphate: step 3/5. In terms of biological role, catalyzes the interconversion of 2-phosphoglycerate and 3-phosphoglycerate. In Streptococcus thermophilus (strain CNRZ 1066), this protein is 2,3-bisphosphoglycerate-dependent phosphoglycerate mutase.